We begin with the raw amino-acid sequence, 447 residues long: UDP-N-acetylmuramoyl-L-alanyl-D-glutamate--2,6-diaminopimelate ligase (447 aa).

T21 contacts UDP-N-acetyl-alpha-D-muramoyl-L-alanyl-D-glutamate. 74–80 (GTNGKTT) is an ATP binding site. UDP-N-acetyl-alpha-D-muramoyl-L-alanyl-D-glutamate is bound by residues 117–118 (TT), S144, Q150, and R152. Residue K184 is modified to N6-carboxylysine. Residues R340, 364-367 (DNPR), G415, and E419 contribute to the meso-2,6-diaminopimelate site. Positions 364–367 (DNPR) match the Meso-diaminopimelate recognition motif motif.

The protein belongs to the MurCDEF family. MurE subfamily. Mg(2+) is required as a cofactor. Post-translationally, carboxylation is probably crucial for Mg(2+) binding and, consequently, for the gamma-phosphate positioning of ATP.

Its subcellular location is the cytoplasm. The catalysed reaction is UDP-N-acetyl-alpha-D-muramoyl-L-alanyl-D-glutamate + meso-2,6-diaminopimelate + ATP = UDP-N-acetyl-alpha-D-muramoyl-L-alanyl-gamma-D-glutamyl-meso-2,6-diaminopimelate + ADP + phosphate + H(+). It functions in the pathway cell wall biogenesis; peptidoglycan biosynthesis. In terms of biological role, catalyzes the addition of meso-diaminopimelic acid to the nucleotide precursor UDP-N-acetylmuramoyl-L-alanyl-D-glutamate (UMAG) in the biosynthesis of bacterial cell-wall peptidoglycan. This chain is UDP-N-acetylmuramoyl-L-alanyl-D-glutamate--2,6-diaminopimelate ligase, found in Helicobacter pylori (strain J99 / ATCC 700824) (Campylobacter pylori J99).